The primary structure comprises 263 residues: Shikimate dehydrogenase (NADP(+)) (263 aa).

Shikimate contacts are provided by residues 16–18 and Thr-65; that span reads SKS. The Proton acceptor role is filled by Lys-69. 2 residues coordinate shikimate: Asn-90 and Asp-105. Residues 125–129 and Leu-208 each bind NADP(+); that span reads GSGGS. Residue Tyr-210 participates in shikimate binding. Position 230 (Gly-230) interacts with NADP(+).

The protein belongs to the shikimate dehydrogenase family. In terms of assembly, homodimer.

The catalysed reaction is shikimate + NADP(+) = 3-dehydroshikimate + NADPH + H(+). It participates in metabolic intermediate biosynthesis; chorismate biosynthesis; chorismate from D-erythrose 4-phosphate and phosphoenolpyruvate: step 4/7. Functionally, involved in the biosynthesis of the chorismate, which leads to the biosynthesis of aromatic amino acids. Catalyzes the reversible NADPH linked reduction of 3-dehydroshikimate (DHSA) to yield shikimate (SA). This Helicobacter acinonychis (strain Sheeba) protein is Shikimate dehydrogenase (NADP(+)).